Reading from the N-terminus, the 243-residue chain is Secreted RxLR effector protein 28 (243 aa).

An N-terminal signal peptide occupies residues 1–26 (MHVSRIIAHIALATAITATTVSPTDA). The RxLR signature appears at 49 to 52 (RGLR). The tract at residues 187–243 (NVDEDKGQNFGHSVSGPPTTTLTGPHTKSGIPPFENLVAPAKGSMPNTRRNGYQFFE) is disordered. The segment covering 199 to 216 (SVSGPPTTTLTGPHTKSG) has biased composition (low complexity).

Belongs to the RxLR effector family.

It localises to the secreted. The protein localises to the host cytoplasm. Its subcellular location is the host nucleus. Functionally, effector that significantly enhances susceptibilities of grapevine and tobacco to pathogens. Acts as a broad suppressor of cell death to interrupt plant immunity. Completely inhibits cell death induced by cell death-inducing proteins, including the PAMP elicitor INF1 from P.infestans. Reduces the transcriptional levels of the defense-related genes and impairs the H(2)O(2) accumulation in N.benthamiana. The polypeptide is Secreted RxLR effector protein 28 (Plasmopara viticola (Downy mildew of grapevine)).